A 104-amino-acid polypeptide reads, in one-letter code: uncharacterized protein (104 aa).

Residues 24-69 (VIKQIIEKYNDKVKELDTLKNQYQNLQQDYENLKQQVSLQRQTMIS) are a coiled coil.

This is an uncharacterized protein from Acanthamoeba polyphaga mimivirus (APMV).